The following is a 238-amino-acid chain: Ribonuclease HII (238 aa).

One can recognise an RNase H type-2 domain in the interval 23 to 215 (QRLCGVDEAG…VREALARLPM (193 aa)). 3 residues coordinate a divalent metal cation: aspartate 29, glutamate 30, and aspartate 124.

This sequence belongs to the RNase HII family. Mn(2+) is required as a cofactor. Requires Mg(2+) as cofactor.

It is found in the cytoplasm. It carries out the reaction Endonucleolytic cleavage to 5'-phosphomonoester.. Functionally, endonuclease that specifically degrades the RNA of RNA-DNA hybrids. The polypeptide is Ribonuclease HII (Cupriavidus necator (strain ATCC 17699 / DSM 428 / KCTC 22496 / NCIMB 10442 / H16 / Stanier 337) (Ralstonia eutropha)).